The following is a 365-amino-acid chain: Glutamate 5-kinase 1 (365 aa).

Lys9 lines the ATP pocket. Substrate-binding residues include Ser49, Asp136, and Asn148. ATP is bound by residues 168–169 (TD) and 210–216 (TGGMKSK). Positions 276 to 353 (SGKITVDEGA…DEFHHEEGIE (78 aa)) constitute a PUA domain.

Belongs to the glutamate 5-kinase family.

Its subcellular location is the cytoplasm. It carries out the reaction L-glutamate + ATP = L-glutamyl 5-phosphate + ADP. It participates in amino-acid biosynthesis; L-proline biosynthesis; L-glutamate 5-semialdehyde from L-glutamate: step 1/2. Its function is as follows. Catalyzes the transfer of a phosphate group to glutamate to form L-glutamate 5-phosphate. The sequence is that of Glutamate 5-kinase 1 from Bacillus licheniformis (strain ATCC 14580 / DSM 13 / JCM 2505 / CCUG 7422 / NBRC 12200 / NCIMB 9375 / NCTC 10341 / NRRL NRS-1264 / Gibson 46).